A 21-amino-acid chain; its full sequence is Hemolymph 65 kDa lectin BG04 (21 aa).

As to expression, hemolymph.

The protein resides in the secreted. Functionally, binds and precipitates antigens of the parasite Echinostoma paraensei. In Biomphalaria glabrata (Bloodfluke planorb), this protein is Hemolymph 65 kDa lectin BG04 (BG04).